Here is a 149-residue protein sequence, read N- to C-terminus: Large ribosomal subunit protein uL13 (149 aa).

The protein belongs to the universal ribosomal protein uL13 family. Part of the 50S ribosomal subunit.

Its function is as follows. This protein is one of the early assembly proteins of the 50S ribosomal subunit, although it is not seen to bind rRNA by itself. It is important during the early stages of 50S assembly. The polypeptide is Large ribosomal subunit protein uL13 (Gemmatimonas aurantiaca (strain DSM 14586 / JCM 11422 / NBRC 100505 / T-27)).